The primary structure comprises 500 residues: Maintenance of mitochondrial morphology protein 1 (500 aa).

At 1–42 (MATQVATPLSPSYTSELIIVCHHVLQHSPTPLTPHSLSFTQG) the chain is on the lumenal side. A helical transmembrane segment spans residues 43–63 (FLLGQLSIALLIFFFIKFFIF). The Cytoplasmic portion of the chain corresponds to 64–500 (GEPPSADDRS…PGALAPGTFR (437 aa)). The SMP-LTD domain maps to 141–375 (QPESLDWFNV…EPRFQQIVLP (235 aa)). 2 stretches are compositionally biased toward low complexity: residues 283 to 294 (SSSPPSTSTTTP) and 302 to 316 (NSTT…HRPT). Disordered regions lie at residues 283 to 316 (SSSP…HRPT) and 406 to 500 (EEEE…GTFR). Over residues 406-415 (EEEEEEEEDG) the composition is skewed to acidic residues. Over residues 438–471 (EGAKLREAEIRAGVRKQERPGMSRAQTSREEGVR) the composition is skewed to basic and acidic residues.

This sequence belongs to the MMM1 family. In terms of assembly, homodimer. Component of the ER-mitochondria encounter structure (ERMES) or MDM complex, composed of MMM1, MDM10, MDM12 and MDM34. An MMM1 homodimer associates with one molecule of MDM12 on each side in a pairwise head-to-tail manner, and the SMP-LTD domains of MMM1 and MDM12 generate a continuous hydrophobic tunnel for phospholipid trafficking.

The protein localises to the endoplasmic reticulum membrane. Its function is as follows. Component of the ERMES/MDM complex, which serves as a molecular tether to connect the endoplasmic reticulum (ER) and mitochondria. Components of this complex are involved in the control of mitochondrial shape and protein biogenesis, and function in nonvesicular lipid trafficking between the ER and mitochondria. The MDM12-MMM1 subcomplex functions in the major beta-barrel assembly pathway that is responsible for biogenesis of all outer membrane beta-barrel proteins, and acts in a late step after the SAM complex. The MDM10-MDM12-MMM1 subcomplex further acts in the TOM40-specific pathway after the action of the MDM12-MMM1 complex. Essential for establishing and maintaining the structure of mitochondria and maintenance of mtDNA nucleoids. In Phaeosphaeria nodorum (strain SN15 / ATCC MYA-4574 / FGSC 10173) (Glume blotch fungus), this protein is Maintenance of mitochondrial morphology protein 1.